An 89-amino-acid polypeptide reads, in one-letter code: Small ribosomal subunit protein uS15 (89 aa).

It belongs to the universal ribosomal protein uS15 family. Part of the 30S ribosomal subunit. Forms a bridge to the 50S subunit in the 70S ribosome, contacting the 23S rRNA.

In terms of biological role, one of the primary rRNA binding proteins, it binds directly to 16S rRNA where it helps nucleate assembly of the platform of the 30S subunit by binding and bridging several RNA helices of the 16S rRNA. Its function is as follows. Forms an intersubunit bridge (bridge B4) with the 23S rRNA of the 50S subunit in the ribosome. This chain is Small ribosomal subunit protein uS15, found in Shewanella piezotolerans (strain WP3 / JCM 13877).